The chain runs to 238 residues: Ribonuclease PH (238 aa).

Phosphate is bound by residues arginine 86 and 124–126 (GTR).

The protein belongs to the RNase PH family. In terms of assembly, homohexameric ring arranged as a trimer of dimers.

It catalyses the reaction tRNA(n+1) + phosphate = tRNA(n) + a ribonucleoside 5'-diphosphate. Its function is as follows. Phosphorolytic 3'-5' exoribonuclease that plays an important role in tRNA 3'-end maturation. Removes nucleotide residues following the 3'-CCA terminus of tRNAs; can also add nucleotides to the ends of RNA molecules by using nucleoside diphosphates as substrates, but this may not be physiologically important. Probably plays a role in initiation of 16S rRNA degradation (leading to ribosome degradation) during starvation. The protein is Ribonuclease PH of Geotalea uraniireducens (strain Rf4) (Geobacter uraniireducens).